A 289-amino-acid chain; its full sequence is MVVVTGQSKGSGDPDEAMSSSDAEDDFQEPATPTATQAGQALPLLPQQFPEVVPLNVGGMHFTTRLSTLRRYEDTMLAAMFSGRHYIPTDAEGRYFIDRDGTYFGDILNFLRSGDLPPRERVRPVYKEAQYYSIGPLLDHLEDVQPLKGEKVRQAFLGLMPYYKDHLERIIEIAKLRAVQRKARFAKLKVCVFKEEMPITPYECPHFNSLRFERSESEAKLFEHHCEVDVSFGPWEAVADVYDLLHCIVTDLSDRGITVDHQCIGVCDKHLINHYYCKRPIYEFKITWW.

Over residues 1–10 the composition is skewed to polar residues; it reads MVVVTGQSKG. A disordered region spans residues 1 to 35; sequence MVVVTGQSKGSGDPDEAMSSSDAEDDFQEPATPTA. The BTB domain maps to 51 to 149; sequence EVVPLNVGGM…HLEDVQPLKG (99 aa).

Its subcellular location is the cell membrane. It is found in the cytoplasm. It localises to the cytosol. May be involved in the control of excitability of cortical neurons. The sequence is that of BTB/POZ domain-containing protein KCTD7 (KCTD7) from Gallus gallus (Chicken).